The chain runs to 311 residues: Porphobilinogen deaminase (311 aa).

Cys241 carries the post-translational modification S-(dipyrrolylmethanemethyl)cysteine.

It belongs to the HMBS family. In terms of assembly, monomer. Dipyrromethane serves as cofactor.

The catalysed reaction is 4 porphobilinogen + H2O = hydroxymethylbilane + 4 NH4(+). It participates in porphyrin-containing compound metabolism; protoporphyrin-IX biosynthesis; coproporphyrinogen-III from 5-aminolevulinate: step 2/4. Tetrapolymerization of the monopyrrole PBG into the hydroxymethylbilane pre-uroporphyrinogen in several discrete steps. The polypeptide is Porphobilinogen deaminase (Carboxydothermus hydrogenoformans (strain ATCC BAA-161 / DSM 6008 / Z-2901)).